A 65-amino-acid chain; its full sequence is Omega-lycotoxin-Am1f (65 aa).

A propeptide spanning residues 1 to 18 (GDEEDEVEETLPVAEEGR) is cleaved from the precursor. Cystine bridges form between C22-C37, C29-C42, C36-C62, and C44-C60.

This sequence belongs to the neurotoxin omega-lctx family. Expressed by the venom gland.

Its subcellular location is the secreted. Modulates Cav2.1/CACNA1A voltage-gated calcium channels (P/Q-type currents) in rat cerebellar Purkinje cells and hippocampal CA1-CA3 neurons. At saturating concentrations (&gt;10 nM) decelerates activation kinetics and slightly increases peak amplitude without affecting deactivation kinetics. In vivo, does not cause death when intravenously injected into mice. In rat models, through its activity on Cav2.1/CACNA1A, has an ameliorative effect on memory defects provoked by hyperstimulation of N-methyl-D-aspartate receptors (NMDARs) in the hippocampus. This Alopecosa marikovskyi (Wolf spider) protein is Omega-lycotoxin-Am1f.